Reading from the N-terminus, the 194-residue chain is 3-isopropylmalate dehydratase small subunit (194 aa).

Belongs to the LeuD family. LeuD type 1 subfamily. In terms of assembly, heterodimer of LeuC and LeuD.

It carries out the reaction (2R,3S)-3-isopropylmalate = (2S)-2-isopropylmalate. It functions in the pathway amino-acid biosynthesis; L-leucine biosynthesis; L-leucine from 3-methyl-2-oxobutanoate: step 2/4. Catalyzes the isomerization between 2-isopropylmalate and 3-isopropylmalate, via the formation of 2-isopropylmaleate. The polypeptide is 3-isopropylmalate dehydratase small subunit (Limosilactobacillus fermentum (strain NBRC 3956 / LMG 18251) (Lactobacillus fermentum)).